A 31-amino-acid polypeptide reads, in one-letter code: Cytochrome b6-f complex subunit 6 (31 aa).

The helical transmembrane segment at 4–26 (ITSYFGFLLAASTITPALLIGLN) threads the bilayer.

It belongs to the PetL family. In terms of assembly, the 4 large subunits of the cytochrome b6-f complex are cytochrome b6, subunit IV (17 kDa polypeptide, PetD), cytochrome f and the Rieske protein, while the 4 small subunits are PetG, PetL, PetM and PetN. The complex functions as a dimer.

The protein resides in the plastid. Its subcellular location is the chloroplast thylakoid membrane. Functionally, component of the cytochrome b6-f complex, which mediates electron transfer between photosystem II (PSII) and photosystem I (PSI), cyclic electron flow around PSI, and state transitions. PetL is important for photoautotrophic growth as well as for electron transfer efficiency and stability of the cytochrome b6-f complex. This is Cytochrome b6-f complex subunit 6 from Calycanthus floridus var. glaucus (Eastern sweetshrub).